Here is a 450-residue protein sequence, read N- to C-terminus: DNA primase DnaG (450 aa).

One can recognise a Toprim domain in the interval 199–273; it reads DSIIVVEGRA…DVDYVARAPE (75 aa). 3 residues coordinate Mg(2+): Glu-205, Asp-247, and Asp-249. The segment covering 320–348 has biased composition (basic and acidic residues); sequence APSKEVKPAPKHEPKPQPVEQKPREEKII. The tract at residues 320–350 is disordered; sequence APSKEVKPAPKHEPKPQPVEQKPREEKIIRP.

The protein belongs to the archaeal DnaG primase family. As to quaternary structure, forms a ternary complex with MCM helicase and DNA. Component of the archaeal exosome complex. Mg(2+) serves as cofactor.

The catalysed reaction is ssDNA + n NTP = ssDNA/pppN(pN)n-1 hybrid + (n-1) diphosphate.. RNA polymerase that catalyzes the synthesis of short RNA molecules used as primers for DNA polymerase during DNA replication. Also part of the exosome, which is a complex involved in RNA degradation. Acts as a poly(A)-binding protein that enhances the interaction between heteromeric, adenine-rich transcripts and the exosome. The sequence is that of DNA primase DnaG from Thermococcus gammatolerans (strain DSM 15229 / JCM 11827 / EJ3).